The chain runs to 509 residues: Probable DNA ligase (509 aa).

Asp218 contributes to the ATP binding site. The active-site N6-AMP-lysine intermediate is Lys220. The ATP site is built by Arg225, Arg240, Glu269, Phe302, Arg374, and Lys380.

This sequence belongs to the ATP-dependent DNA ligase family. Mg(2+) serves as cofactor.

The catalysed reaction is ATP + (deoxyribonucleotide)n-3'-hydroxyl + 5'-phospho-(deoxyribonucleotide)m = (deoxyribonucleotide)n+m + AMP + diphosphate.. Functionally, DNA ligase that seals nicks in double-stranded DNA during DNA replication, DNA recombination and DNA repair. The sequence is that of Probable DNA ligase from Nocardioides sp. (strain ATCC BAA-499 / JS614).